Reading from the N-terminus, the 319-residue chain is tRNA N6-adenosine threonylcarbamoyltransferase (319 aa).

His110 and His114 together coordinate Fe cation. Substrate is bound by residues 135-139 (VVSGG), Asp168, Gly181, Asp185, and Asn277. Asp301 provides a ligand contact to Fe cation.

Belongs to the KAE1 / TsaD family. It depends on Fe(2+) as a cofactor.

The protein localises to the cytoplasm. It catalyses the reaction L-threonylcarbamoyladenylate + adenosine(37) in tRNA = N(6)-L-threonylcarbamoyladenosine(37) in tRNA + AMP + H(+). Required for the formation of a threonylcarbamoyl group on adenosine at position 37 (t(6)A37) in tRNAs that read codons beginning with adenine. Is involved in the transfer of the threonylcarbamoyl moiety of threonylcarbamoyl-AMP (TC-AMP) to the N6 group of A37, together with TsaE and TsaB. TsaD likely plays a direct catalytic role in this reaction. The polypeptide is tRNA N6-adenosine threonylcarbamoyltransferase (Mycoplasma pneumoniae (strain ATCC 29342 / M129 / Subtype 1) (Mycoplasmoides pneumoniae)).